The following is a 417-amino-acid chain: MTTNLNGTFAAVQAASRELALLSDDTINQILNAVADATIAETSFILSENEKDLARMDKSNPKYDRLKLTEERLKGIAADTRNVATLPSPLGRILKETSRPNGMKLTKVSVPFGVIGIIYEARPNVSFDVFSLCLKSGNACILKGGSDADDSNRAIISVIHKVLEKFHVNPHIVELLPADREATAALLNATGYVDLIIPRGSSNLINFVRENARIPVIETGAGICHTYFDEFGDTRKGADIIHNAKTRRVSVCNALDCTIIHEKRLGDLPALCDQLKESKVTIYADTQAYQALEGYYPAELLQPATPESFGTEFLDYKMAVKTVKSFEDALGHIQENSSRHSECIVTENKERATLFTKIVDAACVYTNVSTAFTDGAQFGLGAEIGISTQKLHARGPMGLEEITSYKWVIEGDGQTRW.

It belongs to the gamma-glutamyl phosphate reductase family.

It is found in the cytoplasm. The catalysed reaction is L-glutamate 5-semialdehyde + phosphate + NADP(+) = L-glutamyl 5-phosphate + NADPH + H(+). It functions in the pathway amino-acid biosynthesis; L-proline biosynthesis; L-glutamate 5-semialdehyde from L-glutamate: step 2/2. Catalyzes the NADPH-dependent reduction of L-glutamate 5-phosphate into L-glutamate 5-semialdehyde and phosphate. The product spontaneously undergoes cyclization to form 1-pyrroline-5-carboxylate. This Bacteroides thetaiotaomicron (strain ATCC 29148 / DSM 2079 / JCM 5827 / CCUG 10774 / NCTC 10582 / VPI-5482 / E50) protein is Gamma-glutamyl phosphate reductase.